We begin with the raw amino-acid sequence, 190 residues long: LOB domain-containing protein 1 (190 aa).

Positions 1–11 (MESKSDASVAT) are enriched in polar residues. Residues 1 to 27 (MESKSDASVATTPIISSSSSPPPSLSP) form a disordered region. The region spanning 32 to 133 (SPCAACKILR…AQLAKAQVEM (102 aa)) is the LOB domain.

Belongs to the LOB domain-containing protein family. Expressed in young shoots, roots, stems, leaves and flowers.

The protein is LOB domain-containing protein 1 (LBD1) of Arabidopsis thaliana (Mouse-ear cress).